The primary structure comprises 134 residues: FK506-binding protein 2 (134 aa).

The first 19 residues, methionine 1–serine 19, serve as a signal peptide directing secretion. Residues glycine 39–glutamate 127 form the PPIase FKBP-type domain. The Prevents secretion from ER motif lies at asparagine 131–leucine 134.

Belongs to the FKBP-type PPIase family. FKBP2 subfamily.

The protein resides in the endoplasmic reticulum. The enzyme catalyses [protein]-peptidylproline (omega=180) = [protein]-peptidylproline (omega=0). Inhibited by both FK506 and rapamycin. In terms of biological role, PPIases accelerate the folding of proteins. It catalyzes the cis-trans isomerization of proline imidic peptide bonds in oligopeptides. The polypeptide is FK506-binding protein 2 (fpr2) (Aspergillus fumigatus (strain ATCC MYA-4609 / CBS 101355 / FGSC A1100 / Af293) (Neosartorya fumigata)).